Reading from the N-terminus, the 215-residue chain is MSKVYDWFEERLEIQAIADDITSKYVPPHVNIFYCLGGITLTCFLVQVATGFAMTFYYRPTVTEAFASVQYIMTEANFGWLIRSVHRWSASMMVLMMILHVFRVYLTGGFKKPRELTWVTGVVLAVLTASFGVTGYSLPWDQIGYWAVKIVTGVPDAIPVIGSPLVELLRGSASVGQSTLTRFYSLHTFVLPLLTAVFMLMHFPMIRKQGISGPL.

Residues 32–52 traverse the membrane as a helical segment; the sequence is IFYCLGGITLTCFLVQVATGF. Heme c is bound at residue Cys-35. Heme b is bound by residues His-86 and His-100. 3 helical membrane-spanning segments follow: residues 90 to 110, 116 to 136, and 186 to 206; these read ASMMVLMMILHVFRVYLTGGF, LTWVTGVVLAVLTASFGVTGY, and LHTFVLPLLTAVFMLMHFPMI. Heme b is bound by residues His-187 and His-202.

This sequence belongs to the cytochrome b family. PetB subfamily. As to quaternary structure, the 4 large subunits of the cytochrome b6-f complex are cytochrome b6, subunit IV (17 kDa polypeptide, PetD), cytochrome f and the Rieske protein, while the 4 small subunits are PetG, PetL, PetM and PetN. The complex functions as a dimer. It depends on heme b as a cofactor. Heme c serves as cofactor.

It localises to the plastid. It is found in the chloroplast thylakoid membrane. In terms of biological role, component of the cytochrome b6-f complex, which mediates electron transfer between photosystem II (PSII) and photosystem I (PSI), cyclic electron flow around PSI, and state transitions. The protein is Cytochrome b6 of Solanum bulbocastanum (Wild potato).